A 615-amino-acid chain; its full sequence is DNA mismatch repair protein MutL (615 aa).

The disordered stretch occupies residues 363–397; that stretch reads FAEPAAREPVAPRYTPAPASGSRPAAPWPNAQPGY. The segment covering 364–391 has biased composition (low complexity); sequence AEPAAREPVAPRYTPAPASGSRPAAPWP.

The protein belongs to the DNA mismatch repair MutL/HexB family.

Its function is as follows. This protein is involved in the repair of mismatches in DNA. It is required for dam-dependent methyl-directed DNA mismatch repair. May act as a 'molecular matchmaker', a protein that promotes the formation of a stable complex between two or more DNA-binding proteins in an ATP-dependent manner without itself being part of a final effector complex. The sequence is that of DNA mismatch repair protein MutL from Escherichia coli O8 (strain IAI1).